Reading from the N-terminus, the 1235-residue chain is Receptor-type adenylate cyclase ESAG 4 (1235 aa).

The segment at 1 to 20 (MNMLHLSDRNASLAPSGGEH) is disordered. The Cytoplasmic portion of the chain corresponds to 1 to 32 (MNMLHLSDRNASLAPSGGEHSLPTGGAVCRDA). The helical transmembrane segment at 33 to 53 (MDILPVILRAPVALLLLLVVL) threads the bilayer. Topologically, residues 54-858 (PQLSVGAEAN…SNAGRISGAS (805 aa)) are extracellular. 8 N-linked (GlcNAc...) asparagine glycosylation sites follow: N63, N90, N97, N362, N531, N566, N705, and N830. Residues 859–879 (LVGIIIGGALALFLVVALGVV) traverse the membrane as a helical segment. Residues 880–1235 (PYFFLRNTVI…VSSQVEERLL (356 aa)) are Cytoplasmic-facing. Residues 900–1054 (TLIFTDIESS…RTSNMAARTE (155 aa)) form the Guanylate cyclase domain. Residues D905 and D948 each coordinate Mg(2+).

The protein belongs to the adenylyl cyclase class-3 family. Mg(2+) is required as a cofactor.

The protein localises to the membrane. The catalysed reaction is ATP = 3',5'-cyclic AMP + diphosphate. Its function is as follows. Could act as a receptor for an unknown ligand. The sequence is that of Receptor-type adenylate cyclase ESAG 4 (ESAG4) from Trypanosoma brucei brucei.